We begin with the raw amino-acid sequence, 329 residues long: Biotin synthase (329 aa).

One can recognise a Radical SAM core domain in the interval 48–278; sequence FLGNGVDLCS…TKKIAVCGGR (231 aa). Positions 66, 70, and 73 each coordinate [4Fe-4S] cluster. [2Fe-2S] cluster is bound by residues Ser-143 and Cys-203.

It belongs to the radical SAM superfamily. Biotin synthase family. In terms of assembly, homodimer. [4Fe-4S] cluster serves as cofactor. The cofactor is [2Fe-2S] cluster.

It carries out the reaction (4R,5S)-dethiobiotin + (sulfur carrier)-SH + 2 reduced [2Fe-2S]-[ferredoxin] + 2 S-adenosyl-L-methionine = (sulfur carrier)-H + biotin + 2 5'-deoxyadenosine + 2 L-methionine + 2 oxidized [2Fe-2S]-[ferredoxin]. It participates in cofactor biosynthesis; biotin biosynthesis; biotin from 7,8-diaminononanoate: step 2/2. In terms of biological role, catalyzes the conversion of dethiobiotin (DTB) to biotin by the insertion of a sulfur atom into dethiobiotin via a radical-based mechanism. The sequence is that of Biotin synthase from Geobacter metallireducens (strain ATCC 53774 / DSM 7210 / GS-15).